A 125-amino-acid polypeptide reads, in one-letter code: Small ribosomal subunit protein uS13 (125 aa).

Residues arginine 92–lysine 125 are disordered.

The protein belongs to the universal ribosomal protein uS13 family. In terms of assembly, part of the 30S ribosomal subunit. Forms a loose heterodimer with protein S19. Forms two bridges to the 50S subunit in the 70S ribosome.

Functionally, located at the top of the head of the 30S subunit, it contacts several helices of the 16S rRNA. In the 70S ribosome it contacts the 23S rRNA (bridge B1a) and protein L5 of the 50S subunit (bridge B1b), connecting the 2 subunits; these bridges are implicated in subunit movement. Contacts the tRNAs in the A and P-sites. In Pelodictyon phaeoclathratiforme (strain DSM 5477 / BU-1), this protein is Small ribosomal subunit protein uS13.